We begin with the raw amino-acid sequence, 411 residues long: Acetyl-coenzyme A carboxylase carboxyl transferase subunit beta, chloroplastic (411 aa).

The region spanning 32-302 is the CoA carboxyltransferase N-terminal domain; that stretch reads LWTRCDHCGV…KEQGRIPYGE (271 aa). Positions 36, 39, 55, and 58 each coordinate Zn(2+). The C4-type zinc-finger motif lies at 36 to 58; the sequence is CDHCGVILYIKHLKENQRVCFGC.

It belongs to the AccD/PCCB family. In terms of assembly, acetyl-CoA carboxylase is a heterohexamer composed of biotin carboxyl carrier protein, biotin carboxylase and 2 subunits each of ACCase subunit alpha and ACCase plastid-coded subunit beta (accD). Requires Zn(2+) as cofactor.

The protein resides in the plastid. The protein localises to the chloroplast stroma. It carries out the reaction N(6)-carboxybiotinyl-L-lysyl-[protein] + acetyl-CoA = N(6)-biotinyl-L-lysyl-[protein] + malonyl-CoA. The protein operates within lipid metabolism; malonyl-CoA biosynthesis; malonyl-CoA from acetyl-CoA: step 1/1. Its function is as follows. Component of the acetyl coenzyme A carboxylase (ACC) complex. Biotin carboxylase (BC) catalyzes the carboxylation of biotin on its carrier protein (BCCP) and then the CO(2) group is transferred by the transcarboxylase to acetyl-CoA to form malonyl-CoA. The polypeptide is Acetyl-coenzyme A carboxylase carboxyl transferase subunit beta, chloroplastic (Chlorella vulgaris (Green alga)).